The primary structure comprises 440 residues: Probable D-serine dehydratase (440 aa).

Position 120 is an N6-(pyridoxal phosphate)lysine (K120).

The protein belongs to the serine/threonine dehydratase family. DsdA subfamily. The cofactor is pyridoxal 5'-phosphate.

It catalyses the reaction D-serine = pyruvate + NH4(+). The protein is Probable D-serine dehydratase of Shouchella clausii (strain KSM-K16) (Alkalihalobacillus clausii).